The primary structure comprises 985 residues: Rho guanine nucleotide exchange factor 2 (985 aa).

The tract at residues 1 to 32 (MSRIESLTRARIDRSKEQATKTREKEKMKEAK) is disordered. A Phorbol-ester/DAG-type zinc finger spans residues 39 to 86 (GHLFTTISVSGMTMCYACNKSITAKEALICPTCNVTIHNRCKDTLANC). Residues Ser109, Ser122, Ser129, Ser133, and Ser137 each carry the phosphoserine modification. Residues 131–161 (RQSLLGSRRGLSSLSLAKSVSTTNIAGHFND) form an interaction with DYNLT1 region. Ser143 carries the phosphoserine; by PAK4 modification. Ser151, Ser163, Ser172, Ser174, and Ser177 each carry phosphoserine. Positions 236-433 (KKQDVIYELI…KELLSNVDQD (198 aa)) constitute a DH domain. Lys354 is subject to N6-acetyllysine. Residues 473–572 (KLIHEGCLLW…WIRVIQQSVR (100 aa)) enclose the PH domain. Residues 591–619 (LRRIKTKLQQKNQALVELLQKNVELFAEM) are a coiled coil. Ser646 and Ser649 each carry phosphoserine. Thr680 is modified (phosphothreonine; by MAPK1 or MAPK3). Ser692, Ser710, and Ser781 each carry phosphoserine. Thr795 carries the phosphothreonine modification. Residues 797–866 (EKQATELALL…RQLAALGQNE (70 aa)) adopt a coiled-coil conformation. Ser885 carries the post-translational modification Phosphoserine. Disordered stretches follow at residues 890-909 (DALY…DRLD) and 918-985 (HRPF…ASES). Tyr893 is subject to Phosphotyrosine. Ser895 is subject to Phosphoserine; by PAK4. Basic and acidic residues predominate over residues 919 to 938 (RPFDDREAQELGSPEDRLQD). Ser931, Ser939, and Ser940 each carry phosphoserine. Positions 940 to 949 (SDPDTGSEEE) are enriched in acidic residues. Thr944 is modified (phosphothreonine). 5 positions are modified to phosphoserine: Ser946, Ser951, Ser952, Ser955, and Ser959.

As to quaternary structure, found in a complex composed at least of ARHGEF2, NOD2 and RIPK2. Interacts with RIPK2; the interaction mediates tyrosine phosphorylation of RIPK2 by Src kinase CSK. Interacts with RIPK1 and RIPK3. Interacts with YWHAZ/14-3-3 zeta; when phosphorylated at Ser-885. Interacts with the kinases PAK4, AURKA and MAPK1. Interacts with RHOA and RAC1. Interacts with NOD1. Interacts (via the N- terminal zinc finger) with CAPN6 (via domain II). Interacts with DYNLT1. Post-translationally, phosphorylation of Ser-885 by PAK1 induces binding to protein YWHAZ, promoting its relocation to microtubules and the inhibition of its activity. Phosphorylated by AURKA and CDK1 during mitosis, which negatively regulates its activity. Phosphorylation by MAPK1 or MAPK3 increases nucleotide exchange activity. Phosphorylation by PAK4 releases GEF-H1 from the microtubules. Phosphorylated on serine, threonine and tyrosine residues in a RIPK2-dependent manner. In terms of tissue distribution, ubiquitous, with the exception of liver tissue. Levels are high in hemopoietic tissues (thymus, spleen, bone marrow) as well as in kidney and lung. Expressed in the germinal zones of both the neocortex and the cerebellum and in the pontine gray nuclei.

It is found in the cytoplasm. Its subcellular location is the cytoskeleton. The protein localises to the cell junction. It localises to the tight junction. The protein resides in the golgi apparatus. It is found in the spindle. Its subcellular location is the cytoplasmic vesicle. Activates Rho-GTPases by promoting the exchange of GDP for GTP. May be involved in epithelial barrier permeability, cell motility and polarization, dendritic spine morphology, antigen presentation, leukemic cell differentiation, cell cycle regulation, innate immune response, and cancer. Binds Rac-GTPases, but does not seem to promote nucleotide exchange activity toward Rac-GTPases. May stimulate instead the cortical activity of Rac. Inactive toward CDC42, TC10, or Ras-GTPases. Forms an intracellular sensing system along with NOD1 for the detection of microbial effectors during cell invasion by pathogens. Involved in innate immune signaling transduction pathway promoting cytokine IL6/interleukin-6 and TNF-alpha secretion in macrophage upon stimulation by bacterial peptidoglycans; acts as a signaling intermediate between NOD2 receptor and RIPK2 kinase. Contributes to the tyrosine phosphorylation of RIPK2 through Src tyrosine kinase leading to NF-kappaB activation by NOD2. Overexpression activates Rho-, but not Rac-GTPases, and increases paracellular permeability. Involved in neuronal progenitor cell division and differentiation. Involved in the migration of precerebellar neurons. This Mus musculus (Mouse) protein is Rho guanine nucleotide exchange factor 2 (Arhgef2).